Reading from the N-terminus, the 192-residue chain is Protein hunchback (192 aa).

Disordered regions lie at residues 16–54 (SHHH…SNTN) and 152–192 (LTPP…KYMA). The span at 17 to 28 (HHHHHHHAHHSH) shows a compositional bias: basic residues. Low complexity predominate over residues 32-41 (SNSNASSPHQ). A compositionally biased stretch (basic and acidic residues) spans 173-192 (EPEKEHDLMSNSSEDMKYMA).

This sequence belongs to the hunchback C2H2-type zinc-finger protein family.

It localises to the nucleus. Its function is as follows. Gap class segmentation protein that controls development of head structures. The protein is Protein hunchback (hb) of Drosophila tanythrix (Fruit fly).